We begin with the raw amino-acid sequence, 105 residues long: MSSGEPTTMTPSPSERTPLLSNGSGGAADDGGTTVTISKPNDGVRRIADSLPLSVWLISTIELCERFAYFGTIAPMQNYIQNPRNDPLRPGGIGKTASTMIYPAV.

The segment covering 1 to 15 has biased composition (polar residues); it reads MSSGEPTTMTPSPSE. The disordered stretch occupies residues 1–43; sequence MSSGEPTTMTPSPSERTPLLSNGSGGAADDGGTTVTISKPNDG.

The protein operates within secondary metabolite biosynthesis. Part of the gene cluster that mediates the biosynthesis of imizoquins A to D, tripeptide-derived alkaloids that serve a protective role against oxidative stress that are essential for normal germination. ImqB is a canonical three-module NRPS that assembles the tripeptide backbone of the imizoquins via condensation of Trp, Tyr, and Leu-derived precursors. N-methylation by imqF and phenol oxidation by imqC, followed by cyclization via the FAD-dependent oxidase imqH carry out the three-step transformation of L-tyrosine into tetrahydroisoquinoline. Importantly, this sequence requires the presence of a free amine in the tyrosine moiety, indicating that isoquinoline formation occurs prior to peptide bond formation. The imidazolidin-4-one ring of imizoquins could form following additional oxidation of the methyl-derived bridgehead carbon by imqH. Lastly, O-methylation by imqG and leucine hydroxylation by imqE complete biosynthesis of the imizoquins. The protein is Imizoquin biosynthesis cluster protein I of Aspergillus flavus (strain ATCC 200026 / FGSC A1120 / IAM 13836 / NRRL 3357 / JCM 12722 / SRRC 167).